The chain runs to 317 residues: Ventral anterior homeobox 1 (317 aa).

Residues 1–62 (MEVRYSQDSE…CEKSRASSGD (62 aa)) are disordered. Over residues 18–27 (GLKEGKEGKD) the composition is skewed to basic and acidic residues. Residues 92–151 (PKRTRTSFTAEQLYRLEMEFQRCQYVVGRERTELARQLNLSETQVKVWFQNRRTKQKKDQ) constitute a DNA-binding region (homeobox). The segment at 203–248 (GPSLGITANGGSSSSSRSSAGSSGTAGGSPPLPTVTSSGTVTGLQG) is disordered. Over residues 212–225 (GGSSSSSRSSAGSS) the composition is skewed to low complexity. A compositionally biased stretch (polar residues) spans 236-247 (TVTSSGTVTGLQ).

This sequence belongs to the EMX homeobox family. In terms of tissue distribution, expressed in the anterior neural keel and later in the preoptic area and optic stalk.

It localises to the nucleus. Functionally, transcription factor that is required for closure of the choroid fissure and together with Vax2 is required for optic nerve differentiation and to limit retinal development to the optic cup. This Danio rerio (Zebrafish) protein is Ventral anterior homeobox 1 (vax1).